A 309-amino-acid polypeptide reads, in one-letter code: MSIRIIPQDELGSSEKRTADMIPPLLFPRLKNVYNRRAERLRELAENNPLGDYLRFAALIAHAQEVVLYDHPLRMDLTARIKDANDQGKPPLDIHVLPRDKHWHTLLHSMIAELKPEMSGPALAVIENLEKASEQELEQMASALFASDFASVSSDKAPFIWAALSLYWAQMASLIPGKARAEYGEARQYCPVCGSMPVSSMVQIGTTQGLRYLHCNLCETEWHVVRVKCSNCEQSRDLHYWSLENEQAAVKAESCGDCGTYLKILYQEKDPKVEAVADDLASLVLDARMEQEGFARSSINPFLFPGEGE.

The protein belongs to the FdhE family.

It localises to the cytoplasm. Necessary for formate dehydrogenase activity. The protein is Protein FdhE of Salmonella enteritidis PT4 (strain P125109).